The chain runs to 963 residues: Protocadherin alpha-C1 (963 aa).

Positions 1-18 are cleaved as a signal peptide; that stretch reads MVGWGVAVLCLWVSCGAA. Cadherin domains lie at 19 to 124, 125 to 233, 234 to 340, 349 to 445, and 446 to 555; these read AGQL…SPLF, PAGD…APVF, ERSV…APEL, VPED…TPSF, and PQPQ…YPVI. At 19 to 683 the chain is on the extracellular side; that stretch reads AGQLEYSVPE…GGQLSAQNLY (665 aa). A glycan (N-linked (GlcNAc...) asparagine) is linked at Asn-38. 2 N-linked (GlcNAc...) asparagine glycosylation sites follow: Asn-248 and Asn-274. N-linked (GlcNAc...) asparagine glycosylation occurs at Asn-562. Positions 570 to 667 constitute a Cadherin 6 domain; sequence VPRSARTGHL…NSVPQLLPDF (98 aa). Residues 684–704 form a helical membrane-spanning segment; it reads LVIALACISFLFLGCLLFFVC. Topologically, residues 705-963 are cytoplasmic; that stretch reads TKLHQSPGCC…GNSTTDNSDQ (259 aa). PXXP repeat units follow at residues 812 to 815, 845 to 848, 886 to 889, and 904 to 907; these read PRQP, PGGP, PGNP, and PGSP. Positions 812–907 are 4 X 4 AA repeats of P-X-X-P; it reads PRQPNPDWRY…PDKFIIPGSP (96 aa). The disordered stretch occupies residues 844–902; it reads GPGGPDQQWPTVSSATPEPEAGEVSPPVGAGVNSNSWTFKYGPGNPKQSGPGELPDKFI. Positions 914–963 are disordered; that stretch reads QEPANSQIDKSDFITFGKKEETKKKKKKKKGNKTQEKKEKGNSTTDNSDQ. Positions 922–936 are enriched in basic and acidic residues; sequence DKSDFITFGKKEETK.

It is found in the cell membrane. Functionally, potential calcium-dependent cell-adhesion protein. May be involved in the establishment and maintenance of specific neuronal connections in the brain. The protein is Protocadherin alpha-C1 (PCDHAC1) of Pan troglodytes (Chimpanzee).